Here is a 128-residue protein sequence, read N- to C-terminus: uncharacterized protein (128 aa).

4 helical membrane passes run 5-25 (ILAL…YSMM), 27-47 (PVLV…PLFL), 60-80 (QLWW…FIGL), and 87-107 (SAVT…HFFF). In terms of domain architecture, EamA spans 9–110 (LIWSSSLIVG…FVGHFFFKTK (102 aa)).

The protein localises to the cell membrane. This is an uncharacterized protein from Haemophilus influenzae (strain ATCC 51907 / DSM 11121 / KW20 / Rd).